Here is a 300-residue protein sequence, read N- to C-terminus: Cation-efflux pump FieF (300 aa).

A helical membrane pass occupies residues 24–44 (LLIKIFAWWYTGSVSILAALV). 2 residues coordinate Zn(2+): D45 and D49. 2 helical membrane-spanning segments follow: residues 82–102 (AALA…LTGI) and 114–134 (AGVG…LVTF). Zn(2+) contacts are provided by H153 and D157. The next 2 membrane-spanning stretches (helical) occupy residues 156-176 (SDVM…YGWH) and 178-198 (ADAL…LRMG).

The protein belongs to the cation diffusion facilitator (CDF) transporter (TC 2.A.4) family. FieF subfamily. Homodimer.

It localises to the cell inner membrane. It carries out the reaction Zn(2+)(in) + H(+)(out) = Zn(2+)(out) + H(+)(in). It catalyses the reaction Cd(2+)(in) + H(+)(out) = Cd(2+)(out) + H(+)(in). The enzyme catalyses Fe(2+)(in) + H(+)(out) = Fe(2+)(out) + H(+)(in). In terms of biological role, divalent metal cation transporter which exports Zn(2+), Cd(2+) and possibly Fe(2+). May be involved in zinc and iron detoxification by efflux. In Klebsiella pneumoniae subsp. pneumoniae (strain ATCC 700721 / MGH 78578), this protein is Cation-efflux pump FieF.